The primary structure comprises 220 residues: MVPVNNSPVTIARRGLMLVISSPSGAGKSTIARNLLEKDKNISLSVSVTTRPRRQSEIEGIHYHFISKRDFERMRDGDELLEWAEVHGNFYGTPREPVEAAMAAGRDMLFDIDWQGAEQLQDKMKADVVSIFILPPTMTELQSRLHRRAEDSEEVIKTRLLNSRAEIEHWRDYDYVILNDDLQAAFEGIEAIVKAERVRRDRRHGMFDFVRSLLEEEPKL.

The region spanning 15–194 (GLMLVISSPS…AFEGIEAIVK (180 aa)) is the Guanylate kinase-like domain. 22-29 (SPSGAGKS) provides a ligand contact to ATP.

This sequence belongs to the guanylate kinase family.

The protein resides in the cytoplasm. The enzyme catalyses GMP + ATP = GDP + ADP. Its function is as follows. Essential for recycling GMP and indirectly, cGMP. The protein is Guanylate kinase of Agrobacterium fabrum (strain C58 / ATCC 33970) (Agrobacterium tumefaciens (strain C58)).